The primary structure comprises 376 residues: Erythronate-4-phosphate dehydrogenase (376 aa).

Positions 45 and 67 each coordinate substrate. NAD(+)-binding positions include 127–128 (QV), Asp147, and Thr176. The active site involves Arg209. Asp233 contacts NAD(+). Glu238 is a catalytic residue. His255 (proton donor) is an active-site residue. NAD(+) is bound at residue Gly258. Tyr259 provides a ligand contact to substrate.

It belongs to the D-isomer specific 2-hydroxyacid dehydrogenase family. PdxB subfamily. In terms of assembly, homodimer.

It localises to the cytoplasm. The catalysed reaction is 4-phospho-D-erythronate + NAD(+) = (R)-3-hydroxy-2-oxo-4-phosphooxybutanoate + NADH + H(+). The protein operates within cofactor biosynthesis; pyridoxine 5'-phosphate biosynthesis; pyridoxine 5'-phosphate from D-erythrose 4-phosphate: step 2/5. Functionally, catalyzes the oxidation of erythronate-4-phosphate to 3-hydroxy-2-oxo-4-phosphonooxybutanoate. The protein is Erythronate-4-phosphate dehydrogenase of Aliivibrio fischeri (strain ATCC 700601 / ES114) (Vibrio fischeri).